The primary structure comprises 79 residues: NADH-ubiquinone oxidoreductase chain 4 (79 aa).

2 consecutive transmembrane segments (helical) span residues 24 to 44 (SYTLMIAHGLCSSGLFCLANI) and 54 to 74 (LLINKGLLNFMPSLSLWWFLL).

This sequence belongs to the complex I subunit 4 family.

Its subcellular location is the mitochondrion membrane. It carries out the reaction a ubiquinone + NADH + 5 H(+)(in) = a ubiquinol + NAD(+) + 4 H(+)(out). In terms of biological role, core subunit of the mitochondrial membrane respiratory chain NADH dehydrogenase (Complex I) that is believed to belong to the minimal assembly required for catalysis. Complex I functions in the transfer of electrons from NADH to the respiratory chain. The immediate electron acceptor for the enzyme is believed to be ubiquinone. This Simulium vittatum (Striped black fly) protein is NADH-ubiquinone oxidoreductase chain 4 (ND4).